Here is a 396-residue protein sequence, read N- to C-terminus: Probable glucan endo-1,6-beta-glucosidase B (396 aa).

The N-terminal stretch at 1–17 (MIRRLAAFSALSGLATA) is a signal peptide. N-linked (GlcNAc...) asparagine glycosylation occurs at asparagine 30. Glutamate 219 functions as the Proton donor in the catalytic mechanism. The N-linked (GlcNAc...) asparagine glycan is linked to asparagine 272. Glutamate 320 acts as the Nucleophile in catalysis.

This sequence belongs to the glycosyl hydrolase 5 (cellulase A) family.

The protein resides in the secreted. It carries out the reaction Random hydrolysis of (1-&gt;6)-linkages in (1-&gt;6)-beta-D-glucans.. In terms of biological role, beta-glucanases participate in the metabolism of beta-glucan, the main structural component of the cell wall. Acts on lutean, pustulan and 1,6-oligo-beta-D-glucosides. In Aspergillus fumigatus (strain CBS 144.89 / FGSC A1163 / CEA10) (Neosartorya fumigata), this protein is Probable glucan endo-1,6-beta-glucosidase B (exgB).